The sequence spans 101 residues: NADH-quinone oxidoreductase subunit K (101 aa).

3 consecutive transmembrane segments (helical) span residues 4–24 (LSHY…GIFL), 30–50 (IVLL…FIAF), and 61–81 (VFVF…LAIL).

It belongs to the complex I subunit 4L family. As to quaternary structure, NDH-1 is composed of 14 different subunits. Subunits NuoA, H, J, K, L, M, N constitute the membrane sector of the complex.

The protein localises to the cell inner membrane. It carries out the reaction a quinone + NADH + 5 H(+)(in) = a quinol + NAD(+) + 4 H(+)(out). NDH-1 shuttles electrons from NADH, via FMN and iron-sulfur (Fe-S) centers, to quinones in the respiratory chain. The immediate electron acceptor for the enzyme in this species is believed to be ubiquinone. Couples the redox reaction to proton translocation (for every two electrons transferred, four hydrogen ions are translocated across the cytoplasmic membrane), and thus conserves the redox energy in a proton gradient. This is NADH-quinone oxidoreductase subunit K from Methylovorus glucosotrophus (strain SIP3-4).